Consider the following 842-residue polypeptide: Probable cleavage and polyadenylation specificity factor subunit 2 (842 aa).

Basic and acidic residues predominate over residues 414-425 (AEETRIRMERAR). Disordered stretches follow at residues 414–442 (AEETRIRMERARRQAQANESDDSDDDDIA) and 708–747 (METFQDDQNKQEASEENVAEGEKSNGQSKENDENASSIPI). Residues 432 to 441 (ESDDSDDDDI) are compositionally biased toward acidic residues. Positions 731 to 747 (SNGQSKENDENASSIPI) are enriched in polar residues.

The protein belongs to the metallo-beta-lactamase superfamily. RNA-metabolizing metallo-beta-lactamase-like family. CPSF2/YSH1 subfamily. In terms of assembly, CPSF is a heterotetramer composed of four distinct subunits 160, 100, 70 and 30 kDa.

The protein resides in the nucleus. Functionally, CPSF plays a key role in pre-mRNA 3'-end formation, recognizing the AAUAAA signal sequence and interacting with poly(A)polymerase and other factors to bring about cleavage and poly(A) addition. The polypeptide is Probable cleavage and polyadenylation specificity factor subunit 2 (Caenorhabditis briggsae).